A 282-amino-acid chain; its full sequence is Formamidopyrimidine-DNA glycosylase (282 aa).

Pro-2 (schiff-base intermediate with DNA) is an active-site residue. The Proton donor role is filled by Glu-3. Lys-61 (proton donor; for beta-elimination activity) is an active-site residue. Positions 93, 112, and 158 each coordinate DNA. The segment at 244–278 (DAYGREGEPCRRCGAIMRRDKFMNRSSFYCPRCQP) adopts an FPG-type zinc-finger fold. Arg-268 functions as the Proton donor; for delta-elimination activity in the catalytic mechanism.

The protein belongs to the FPG family. As to quaternary structure, monomer. The cofactor is Zn(2+).

It catalyses the reaction Hydrolysis of DNA containing ring-opened 7-methylguanine residues, releasing 2,6-diamino-4-hydroxy-5-(N-methyl)formamidopyrimidine.. The catalysed reaction is 2'-deoxyribonucleotide-(2'-deoxyribose 5'-phosphate)-2'-deoxyribonucleotide-DNA = a 3'-end 2'-deoxyribonucleotide-(2,3-dehydro-2,3-deoxyribose 5'-phosphate)-DNA + a 5'-end 5'-phospho-2'-deoxyribonucleoside-DNA + H(+). Involved in base excision repair of DNA damaged by oxidation or by mutagenic agents. Acts as a DNA glycosylase that recognizes and removes damaged bases. Has a preference for oxidized purines, such as 7,8-dihydro-8-oxoguanine (8-oxoG). Has AP (apurinic/apyrimidinic) lyase activity and introduces nicks in the DNA strand. Cleaves the DNA backbone by beta-delta elimination to generate a single-strand break at the site of the removed base with both 3'- and 5'-phosphates. The sequence is that of Formamidopyrimidine-DNA glycosylase from Mycolicibacterium gilvum (strain PYR-GCK) (Mycobacterium gilvum (strain PYR-GCK)).